The primary structure comprises 606 residues: Phosphomethylpyrimidine synthase (606 aa).

The disordered stretch occupies residues 84–103; the sequence is EPYPARSVKPEDNGLTSSPI. Residues Asn209, Met238, Tyr267, His303, 323 to 325, 364 to 367, and Glu403 each bind substrate; these read SRG and DGLR. A Zn(2+)-binding site is contributed by His407. A substrate-binding site is contributed by Tyr430. His471 is a Zn(2+) binding site. Positions 551, 554, and 559 each coordinate [4Fe-4S] cluster.

This sequence belongs to the ThiC family. In terms of assembly, homodimer. The cofactor is [4Fe-4S] cluster.

The catalysed reaction is 5-amino-1-(5-phospho-beta-D-ribosyl)imidazole + S-adenosyl-L-methionine = 4-amino-2-methyl-5-(phosphooxymethyl)pyrimidine + CO + 5'-deoxyadenosine + formate + L-methionine + 3 H(+). It functions in the pathway cofactor biosynthesis; thiamine diphosphate biosynthesis. Catalyzes the synthesis of the hydroxymethylpyrimidine phosphate (HMP-P) moiety of thiamine from aminoimidazole ribotide (AIR) in a radical S-adenosyl-L-methionine (SAM)-dependent reaction. In Bartonella tribocorum (strain CIP 105476 / IBS 506), this protein is Phosphomethylpyrimidine synthase.